The primary structure comprises 134 residues: S-protein homolog 18 (134 aa).

The signal sequence occupies residues 1–25 (MCPSSFRLILSVILIAFLFVGLCEA). Asn-87 is a glycosylation site (N-linked (GlcNAc...) asparagine).

It belongs to the plant self-incompatibility (S1) protein family.

The protein localises to the secreted. This is S-protein homolog 18 from Arabidopsis thaliana (Mouse-ear cress).